A 224-amino-acid polypeptide reads, in one-letter code: C-&gt;U-editing enzyme APOBEC-2 (224 aa).

A disordered region spans residues M1–N23. Zn(2+) is bound by residues E60 and H98. Residues G64–L169 enclose the CMP/dCMP-type deaminase domain. Catalysis depends on E100, which acts as the Proton donor. Zn(2+)-binding residues include C128 and C131.

The protein belongs to the cytidine and deoxycytidylate deaminase family. As to quaternary structure, homotetramer. The cofactor is Zn(2+). Expressed exclusively in heart and skeletal muscle.

The catalysed reaction is cytidine(6666) in apoB mRNA + H2O + H(+) = uridine(6666) in apoB mRNA + NH4(+). In terms of biological role, probable C to U editing enzyme whose physiological substrate is not yet known. Does not display detectable apoB mRNA editing. Has a low intrinsic cytidine deaminase activity. May play a role in the epigenetic regulation of gene expression through the process of active DNA demethylation. This is C-&gt;U-editing enzyme APOBEC-2 (Apobec2) from Mus musculus (Mouse).